The following is a 609-amino-acid chain: Chaperone protein DnaK (609 aa).

At T172 the chain carries Phosphothreonine; by autocatalysis. The disordered stretch occupies residues 578–609; it reads QAQAQQQAGAGGAAKKDENVVDAEFEEVKDDK. Positions 597–609 are enriched in acidic residues; sequence VVDAEFEEVKDDK.

It belongs to the heat shock protein 70 family.

In terms of biological role, acts as a chaperone. This Geobacillus sp. (strain WCH70) protein is Chaperone protein DnaK.